The following is a 142-amino-acid chain: Putative pre-16S rRNA nuclease (142 aa).

This sequence belongs to the YqgF nuclease family.

Its subcellular location is the cytoplasm. In terms of biological role, could be a nuclease involved in processing of the 5'-end of pre-16S rRNA. This is Putative pre-16S rRNA nuclease from Staphylococcus saprophyticus subsp. saprophyticus (strain ATCC 15305 / DSM 20229 / NCIMB 8711 / NCTC 7292 / S-41).